Reading from the N-terminus, the 896-residue chain is DNA mismatch repair protein MutS (896 aa).

Residue Gly-618–Ser-625 participates in ATP binding. Over residues Gly-805–Ser-825 the composition is skewed to basic and acidic residues. A disordered region spans residues Gly-805 to Asp-826.

It belongs to the DNA mismatch repair MutS family.

This protein is involved in the repair of mismatches in DNA. It is possible that it carries out the mismatch recognition step. This protein has a weak ATPase activity. The sequence is that of DNA mismatch repair protein MutS from Halothermothrix orenii (strain H 168 / OCM 544 / DSM 9562).